A 207-amino-acid chain; its full sequence is Thymidine kinase (207 aa).

ATP contacts are provided by residues 15–22 (GSMFSGKS) and 88–91 (DEVQ). Catalysis depends on E89, which acts as the Proton acceptor. Positions 145, 148, 183, and 186 each coordinate Zn(2+).

Belongs to the thymidine kinase family. As to quaternary structure, homotetramer.

It localises to the cytoplasm. The catalysed reaction is thymidine + ATP = dTMP + ADP + H(+). This is Thymidine kinase from Oceanobacillus iheyensis (strain DSM 14371 / CIP 107618 / JCM 11309 / KCTC 3954 / HTE831).